A 142-amino-acid polypeptide reads, in one-letter code: Large ribosomal subunit protein uL13 (142 aa).

The protein belongs to the universal ribosomal protein uL13 family. Part of the 50S ribosomal subunit.

Functionally, this protein is one of the early assembly proteins of the 50S ribosomal subunit, although it is not seen to bind rRNA by itself. It is important during the early stages of 50S assembly. The chain is Large ribosomal subunit protein uL13 from Shigella sonnei (strain Ss046).